The sequence spans 1052 residues: Kinesin-like protein KIF11 (1052 aa).

One can recognise a Kinesin motor domain in the interval 17 to 358 (NIQVVVRCRP…LEYAHRAKNI (342 aa)). 104-111 (GQTGTGKT) contributes to the ATP binding site. K145 carries the post-translational modification N6-acetyllysine. Residues 364-478 (VNQKLTKKAL…ETKLQLVKEE (115 aa)) are a coiled coil. A Phosphothreonine modification is found at T457. K476 participates in a covalent cross-link: Glycyl lysine isopeptide (Lys-Gly) (interchain with G-Cter in SUMO2). Residue T925 is modified to Phosphothreonine. Disordered stretches follow at residues 950-1026 (LQKK…LNPV) and 1033-1052 (EASDLSISKSRLPLHTSINL). A coiled-coil region spans residues 963 to 988 (EASKETSQDMDEEREALEQCTEELVS). Residues 1016–1026 (KDKENRGLNPV) show a composition bias toward basic and acidic residues.

This sequence belongs to the TRAFAC class myosin-kinesin ATPase superfamily. Kinesin family. BimC subfamily. Interacts with the thyroid hormone receptor in the presence of thyroid hormone. Component of a large chromatin remodeling complex, at least composed of MYSM1, PCAF, RBM10 and KIF11/TRIP5. Interacts with RARRES1 and AGBL2. Phosphorylated exclusively on serine during S phase, but on both serine and Thr-925 during mitosis, so controlling the association of KIF11 with the spindle apparatus (probably during early prophase).

The protein localises to the cytoplasm. Its subcellular location is the cytoskeleton. The protein resides in the spindle pole. Functionally, motor protein required for establishing a bipolar spindle during mitosis. Required in non-mitotic cells for transport of secretory proteins from the Golgi complex to the cell surface. In Mus musculus (Mouse), this protein is Kinesin-like protein KIF11 (Kif11).